The primary structure comprises 352 residues: Dof zinc finger protein DOF1.8 (352 aa).

The disordered stretch occupies residues 24–46; sequence LKQQSNPPSPATPVERKARPEKD. A compositionally biased stretch (basic and acidic residues) spans 37-46; the sequence is VERKARPEKD. The Dof-type zinc finger occupies 49-103; sequence LNCPRCNSLNTKFCYYNNYSLTQPRYFCKDCRRYWTAGGSLRNIPVGGGVRKNKR. Positions 51, 54, 76, and 79 each coordinate Zn(2+). Disordered stretches follow at residues 93-136 and 265-334; these read PVGG…PLPH and GGDP…VGFW. Residues 104–129 show a composition bias toward low complexity; sequence SSSNSSSSSPSSSSSSKKPLFANNNT. A compositionally biased stretch (basic and acidic residues) spans 310 to 323; it reads ENNDEHSDHEHEKE.

The protein localises to the nucleus. Transcription factor that binds specifically to a 5'-AA[AG]G-3' consensus core sequence. The polypeptide is Dof zinc finger protein DOF1.8 (DOF1.8) (Arabidopsis thaliana (Mouse-ear cress)).